The primary structure comprises 527 residues: Bifunctional methyltransferase (527 aa).

The hemK stretch occupies residues 1–309 (MQYSIKQVLS…GHSRVILFSP (309 aa)). Positions 1–311 (MQYSIKQVLS…SRVILFSPIN (311 aa)) are RF MTase. Residues 149 to 153 (GTGSG), Asp172, Trp201, Asn216, Glu356, Glu381, Asn408, and Asp430 contribute to the S-adenosyl-L-methionine site. 216–219 (NPPY) lines the substrate pocket. The tract at residues 310 to 527 (INLNRSYARR…IILQHVSGDH (218 aa)) is tRNA (guanine-N(7)-)-methyltransferase. The tract at residues 314–527 (RSYARRIGKS…IILQHVSGDH (214 aa)) is tRNA MTase. Asp430 is an active-site residue. 2 residues coordinate substrate: Lys434 and Asp466.

The protein in the C-terminal section; belongs to the class I-like SAM-binding methyltransferase superfamily. TrmB family. It in the N-terminal section; belongs to the protein N5-glutamine methyltransferase family. PrmC subfamily.

It carries out the reaction L-glutaminyl-[peptide chain release factor] + S-adenosyl-L-methionine = N(5)-methyl-L-glutaminyl-[peptide chain release factor] + S-adenosyl-L-homocysteine + H(+). It catalyses the reaction guanosine(46) in tRNA + S-adenosyl-L-methionine = N(7)-methylguanosine(46) in tRNA + S-adenosyl-L-homocysteine. Its function is as follows. Methylates the class 1 translation termination release factors RF1/PrfA and RF2/PrfB on the glutamine residue of the universally conserved GGQ motif. Catalyzes the formation of N(7)-methylguanine at position 46 (m7G46) in tRNA. This Rickettsia felis (strain ATCC VR-1525 / URRWXCal2) (Rickettsia azadi) protein is Bifunctional methyltransferase (prmC/trmB).